The chain runs to 519 residues: Sorting nexin-2 (519 aa).

2 disordered regions span residues 1–20 (MAAE…DFEE) and 30–103 (STVS…VTPV). Low complexity-rich tracts occupy residues 30–44 (STVS…SPDP) and 93–103 (SSETSPAVTPV). Phosphoserine is present on Ser-97. Residues Thr-101 and Thr-104 each carry the phosphothreonine modification. Phosphoserine is present on residues Ser-117 and Ser-119. The region spanning 140–269 (FDIEIGVSDP…QFLESSELPR (130 aa)) is the PX domain. The a 1,2-diacyl-sn-glycero-3-phospho-(1D-myo-inositol-3-phosphate) site is built by Arg-183, Ser-185, Lys-211, and Arg-235. Ser-185 carries the phosphoserine modification. Residues 260–519 (QFLESSELPR…AFLPEAKAIA (260 aa)) form an interaction with RhoG region. Ser-277 is subject to Phosphoserine. Residues 278-295 (GAGILRMVNKAADAVNKM) form a membrane-binding amphipathic helix region. Residues 299 to 519 (MNESDAWFEE…AFLPEAKAIA (221 aa)) enclose the BAR domain. Lys-469 is modified (N6-acetyllysine).

Belongs to the sorting nexin family. Predominantly forms heterodimers with BAR domain-containing sorting nexins SNX5, SNX6 and SNX32; can self-associate to form homodimers. The heterodimers are proposed to self-assemble into helical arrays on the membrane to stabilize and expand local membrane curvature underlying endosomal tubule formation. Thought to be a component of the originally described retromer complex (also called SNX-BAR retromer) which is a pentamer containing the heterotrimeric retromer cargo-selective complex (CSC), also decribed as vacuolar protein sorting subcomplex (VPS) and a heterodimeric membrane-deforming subcomplex formed between SNX1 or SNX2 and SNX5 or SNX6 (also called SNX-BAR subcomplex); the respective CSC and SNX-BAR subcomplexes associate with low affinity. Interacts with SNX5, SNX6, SNX32, VPS26A, VPS29, VPS35, FNBP1, KALRN, RHOG (GDP-bound form).

It localises to the early endosome membrane. The protein resides in the cell projection. The protein localises to the lamellipodium. In terms of biological role, involved in several stages of intracellular trafficking. Interacts with membranes containing phosphatidylinositol 3-phosphate (PtdIns(3P)) or phosphatidylinositol 3,5-bisphosphate (PtdIns(3,5)P2). Acts in part as component of the retromer membrane-deforming SNX-BAR subcomplex. The SNX-BAR retromer mediates retrograde transport of cargo proteins from endosomes to the trans-Golgi network (TGN) and is involved in endosome-to-plasma membrane transport for cargo protein recycling. The SNX-BAR subcomplex functions to deform the donor membrane into a tubular profile called endosome-to-TGN transport carrier (ETC). Can sense membrane curvature and has in vitro vesicle-to-membrane remodeling activity. Required for retrograde endosome-to-TGN transport of TGN38. Promotes KALRN- and RHOG-dependent but retromer-independent membrane remodeling such as lamellipodium formation; the function is dependent on GEF activity of KALRN. The chain is Sorting nexin-2 (SNX2) from Bos taurus (Bovine).